The sequence spans 93 residues: Acylphosphatase (93 aa).

The region spanning 6–92 (RAHVWVGGKV…EGLTHFEVLR (87 aa)) is the Acylphosphatase-like domain. Residues arginine 21 and asparagine 39 contribute to the active site.

The protein belongs to the acylphosphatase family.

It carries out the reaction an acyl phosphate + H2O = a carboxylate + phosphate + H(+). This Gloeobacter violaceus (strain ATCC 29082 / PCC 7421) protein is Acylphosphatase (acyP).